Consider the following 403-residue polypeptide: Cysteine desulfurase IscS (403 aa).

Pyridoxal 5'-phosphate contacts are provided by residues 75-76 (AT), asparagine 155, glutamine 183, and 203-205 (SAH). At lysine 206 the chain carries N6-(pyridoxal phosphate)lysine. Threonine 243 serves as a coordination point for pyridoxal 5'-phosphate. The active-site Cysteine persulfide intermediate is cysteine 328. Cysteine 328 lines the [2Fe-2S] cluster pocket.

Belongs to the class-V pyridoxal-phosphate-dependent aminotransferase family. NifS/IscS subfamily. As to quaternary structure, homodimer. Forms a heterotetramer with IscU, interacts with other sulfur acceptors. Pyridoxal 5'-phosphate serves as cofactor.

The protein localises to the cytoplasm. The enzyme catalyses (sulfur carrier)-H + L-cysteine = (sulfur carrier)-SH + L-alanine. It functions in the pathway cofactor biosynthesis; iron-sulfur cluster biosynthesis. Master enzyme that delivers sulfur to a number of partners involved in Fe-S cluster assembly, tRNA modification or cofactor biosynthesis. Catalyzes the removal of elemental sulfur atoms from cysteine to produce alanine. Functions as a sulfur delivery protein for Fe-S cluster synthesis onto IscU, an Fe-S scaffold assembly protein, as well as other S acceptor proteins. This Psychromonas ingrahamii (strain DSM 17664 / CCUG 51855 / 37) protein is Cysteine desulfurase IscS.